A 323-amino-acid chain; its full sequence is ADP-L-glycero-D-manno-heptose-6-epimerase (323 aa).

Residues 10-11 (FI), 31-32 (DN), Lys-38, Arg-53, 75-79 (MGACS), and Asn-92 each bind NADP(+). The Proton acceptor role is filled by Tyr-143. An NADP(+)-binding site is contributed by Lys-147. Asn-170 is a binding site for substrate. Residues Val-171 and Lys-179 each coordinate NADP(+). The active-site Proton acceptor is Lys-179. Residues Asp-181, Lys-188, 202–205 (FRSC), Arg-216, and Tyr-281 each bind substrate.

This sequence belongs to the NAD(P)-dependent epimerase/dehydratase family. HldD subfamily. As to quaternary structure, homopentamer. NADP(+) is required as a cofactor.

The enzyme catalyses ADP-D-glycero-beta-D-manno-heptose = ADP-L-glycero-beta-D-manno-heptose. Its pathway is nucleotide-sugar biosynthesis; ADP-L-glycero-beta-D-manno-heptose biosynthesis; ADP-L-glycero-beta-D-manno-heptose from D-glycero-beta-D-manno-heptose 7-phosphate: step 4/4. Catalyzes the interconversion between ADP-D-glycero-beta-D-manno-heptose and ADP-L-glycero-beta-D-manno-heptose via an epimerization at carbon 6 of the heptose. This chain is ADP-L-glycero-D-manno-heptose-6-epimerase, found in Nitratidesulfovibrio vulgaris (strain ATCC 29579 / DSM 644 / CCUG 34227 / NCIMB 8303 / VKM B-1760 / Hildenborough) (Desulfovibrio vulgaris).